We begin with the raw amino-acid sequence, 167 residues long: Putative C-type lectin-like domain family 1 (167 aa).

Over 1–67 (MVSNFFHVIQ…KYDCPFSGTS (67 aa)) the chain is Cytoplasmic. The chain crosses the membrane as a helical; Signal-anchor for type II membrane protein span at residues 68–88 (FVVFSLFLICAMAGDVVYADI). Residues 89 to 167 (KTVRTSPLEL…DITAMVRFNI (79 aa)) lie on the Extracellular side of the membrane. N-linked (GlcNAc...) asparagine glycans are attached at residues asparagine 109, asparagine 140, and asparagine 149. Positions 116–167 (SCPAKDWKVHKGKCYWIAETKKSWNKSQNDCAINNSYLMVIQDITAMVRFNI) constitute a C-type lectin; atypical domain.

Expressed in spleen, lymph node, and tonsil. Lower expression in peripheral blood, bone marrow, and colon. No expression detected in thymus. Highly expressed in dendritic and B-cells.

The protein resides in the cell membrane. In terms of biological role, may function in mediating immune cell-cell interactions. May act as a T-cell costimulatory molecule, enhancing anti-CD3-induced proliferation. May play a role in the interaction of dendritic cells with T-cells and the cells of the adaptive immune response. The chain is Putative C-type lectin-like domain family 1 from Homo sapiens (Human).